We begin with the raw amino-acid sequence, 55 residues long: Ribosome biogenesis protein Nop10 (55 aa).

Belongs to the NOP10 family.

Its function is as follows. Involved in ribosome biogenesis; more specifically in 18S rRNA pseudouridylation and in cleavage of pre-rRNA. The sequence is that of Ribosome biogenesis protein Nop10 from Methanosphaera stadtmanae (strain ATCC 43021 / DSM 3091 / JCM 11832 / MCB-3).